Reading from the N-terminus, the 246-residue chain is MTRIELKGVWKLSKNCAIIVAAGKGSRMGFDINKVFIEIGEKPIIQYSLECFESHPDIDEIVLVAKLNEIEKFQHIIKSNNMKKVKKIVVGGNTRRESVVNALSVIKDSDVVVIHDGARPFISHDLISKGIKYANKYGACTCGVTPKDTIKVKDKLNFIKESLNRDFLISVQTPQSFKYKLIWEGHNHKIDENINITDDTSLMEYLGHNVFVYNGEYTNIKITTKEDLIFAEEFVKKFNNVKNSLT.

It belongs to the IspD/TarI cytidylyltransferase family. IspD subfamily.

It catalyses the reaction 2-C-methyl-D-erythritol 4-phosphate + CTP + H(+) = 4-CDP-2-C-methyl-D-erythritol + diphosphate. It participates in isoprenoid biosynthesis; isopentenyl diphosphate biosynthesis via DXP pathway; isopentenyl diphosphate from 1-deoxy-D-xylulose 5-phosphate: step 2/6. Its function is as follows. Catalyzes the formation of 4-diphosphocytidyl-2-C-methyl-D-erythritol from CTP and 2-C-methyl-D-erythritol 4-phosphate (MEP). The sequence is that of 2-C-methyl-D-erythritol 4-phosphate cytidylyltransferase from Clostridium tetani (strain Massachusetts / E88).